Consider the following 407-residue polypeptide: Aminomethyltransferase, mitochondrial (407 aa).

The transit peptide at 1–29 directs the protein to the mitochondrion; it reads MRGGLWQVGQSITRRLGQSDKKTIVRRWY. Substrate-binding residues include Glu234, Arg265, and Tyr403.

It belongs to the GcvT family. As to quaternary structure, the glycine cleavage system is composed of four proteins: P, T, L and H.

It localises to the mitochondrion. The catalysed reaction is N(6)-[(R)-S(8)-aminomethyldihydrolipoyl]-L-lysyl-[protein] + (6S)-5,6,7,8-tetrahydrofolate = N(6)-[(R)-dihydrolipoyl]-L-lysyl-[protein] + (6R)-5,10-methylene-5,6,7,8-tetrahydrofolate + NH4(+). Functionally, the glycine cleavage system catalyzes the degradation of glycine. This Flaveria trinervia (Clustered yellowtops) protein is Aminomethyltransferase, mitochondrial (GDCST).